The sequence spans 464 residues: Meiotic plaque component protein 54 (464 aa).

Residues 71–102 are disordered; sequence SISTTITPNKSSLKSPRGKRASKNSFDNETKL. Coiled-coil stretches lie at residues 99–119, 156–193, and 231–365; these read ETKL…VNRC, KAEC…DHLL, and SINS…LQTQ.

In terms of assembly, interacts directly with SPO21/MPC70, NUD1, SPO74 and SPC42. Probable component of a spindle pole body (SPB) complex composed of ADY3, SSP1, DON1, MPC54, SPO21/MPC70, NUD1 and CNM67.

The protein resides in the prospore membrane. Its subcellular location is the cytoplasm. It localises to the cytoskeleton. The protein localises to the microtubule organizing center. It is found in the spindle pole body. The protein resides in the spindle pole. Its function is as follows. Involved in the pathway that organizes the shaping and sizing of the prospore membrane (PSM) during sporulation. The protein is Meiotic plaque component protein 54 (MPC54) of Saccharomyces cerevisiae (strain ATCC 204508 / S288c) (Baker's yeast).